Here is a 269-residue protein sequence, read N- to C-terminus: 3-deoxy-manno-octulosonate cytidylyltransferase (269 aa).

This sequence belongs to the KdsB family.

The protein localises to the cytoplasm. The enzyme catalyses 3-deoxy-alpha-D-manno-oct-2-ulosonate + CTP = CMP-3-deoxy-beta-D-manno-octulosonate + diphosphate. It functions in the pathway nucleotide-sugar biosynthesis; CMP-3-deoxy-D-manno-octulosonate biosynthesis; CMP-3-deoxy-D-manno-octulosonate from 3-deoxy-D-manno-octulosonate and CTP: step 1/1. The protein operates within bacterial outer membrane biogenesis; lipopolysaccharide biosynthesis. Its function is as follows. Activates KDO (a required 8-carbon sugar) for incorporation into bacterial lipopolysaccharide in Gram-negative bacteria. The chain is 3-deoxy-manno-octulosonate cytidylyltransferase from Cupriavidus taiwanensis (strain DSM 17343 / BCRC 17206 / CCUG 44338 / CIP 107171 / LMG 19424 / R1) (Ralstonia taiwanensis (strain LMG 19424)).